The primary structure comprises 396 residues: 12-oxophytodienoate reductase 3 (396 aa).

FMN contacts are provided by residues Pro31–Thr33, Gly64, and Gln106. His185–His188 is a binding site for substrate. The active-site Proton donor is the Tyr190. Residue Arg237 coordinates FMN. Residue Arg283 coordinates substrate. FMN is bound by residues Gly321 and Gly342–Arg343. The interval Gly342–Arg343 is FMN. Residues Ser394 to Leu396 carry the Microbody targeting signal motif.

It belongs to the NADH:flavin oxidoreductase/NADH oxidase family. Requires FMN as cofactor. In terms of tissue distribution, expressed in roots and to a lower extent in leaves and flowers.

It is found in the peroxisome. The catalysed reaction is (1S,2S)-OPC-8 + NADP(+) = (9S,13S,15Z)-12-oxophyto-10,15-dienoate + NADPH + H(+). It functions in the pathway lipid metabolism; oxylipin biosynthesis. Its function is as follows. Specifically cleaves olefinic bonds in cyclic enones. Involved in the biosynthesis of jasmonic acid (JA) and perhaps in biosynthesis or metabolism of other oxylipin signaling moleclules. It is required for the spatial and temporal regulation of JA levels during dehiscence of anthers, promoting the stomium degeneration program. In vitro, reduces 9S,13S-12-oxophytodienoic acid (9S,13S-OPDA) and 9R,13R-OPDA to 9S,13S-OPC-8:0 and 9R,13R-OPC-8:0, respectively. In Solanum lycopersicum (Tomato), this protein is 12-oxophytodienoate reductase 3 (OPR3).